We begin with the raw amino-acid sequence, 369 residues long: MFCVAPPESEAKMNITKGGLVLFSANSNSSCMELSKKIAERLGVEMGKVQVYQEPDRETRVQIQESVRGKDVFIIQTVSKDVNTTIMELLIMVYACKTSCAKSIIGVVPYFPYSKQCKMRKRGSIVSKLLASMMCKAGLTHLITMDLHQKEIQGFFNIPVDNLRASPFLLQYIQEEIPDYRNAVIVAKSPASAKRAQSFAERLRLGIAVIHGEAQDAESDLVDGRHSPPMVRSAAAIHPSLEIPMLIPKEKPPITVVGDVGGRIAIIVDDIIDDVDSFLAAAETLKERGAYKIFVMATHGLLSSDAPLLIEESAIDEVVVTNTIPHEIQKLQCPKIKTVDISMTLSEAIRRIHNGESMSYLFRNIGLDD.

Residue M1 is modified to N-acetylmethionine. A phosphoserine mark is found at S219, S227, and S233.

This sequence belongs to the ribose-phosphate pyrophosphokinase family. Binds to PRPS1 and PRPS2.

In terms of biological role, seems to play a negative regulatory role in 5-phosphoribose 1-diphosphate synthesis. The sequence is that of Phosphoribosyl pyrophosphate synthase-associated protein 2 (PRPSAP2) from Bos taurus (Bovine).